The primary structure comprises 193 residues: ATP-dependent Clp protease proteolytic subunit (193 aa).

The Nucleophile role is filled by Ser98. His123 is a catalytic residue.

This sequence belongs to the peptidase S14 family. In terms of assembly, fourteen ClpP subunits assemble into 2 heptameric rings which stack back to back to give a disk-like structure with a central cavity, resembling the structure of eukaryotic proteasomes.

It is found in the cytoplasm. It catalyses the reaction Hydrolysis of proteins to small peptides in the presence of ATP and magnesium. alpha-casein is the usual test substrate. In the absence of ATP, only oligopeptides shorter than five residues are hydrolyzed (such as succinyl-Leu-Tyr-|-NHMec, and Leu-Tyr-Leu-|-Tyr-Trp, in which cleavage of the -Tyr-|-Leu- and -Tyr-|-Trp bonds also occurs).. Its function is as follows. Cleaves peptides in various proteins in a process that requires ATP hydrolysis. Has a chymotrypsin-like activity. Plays a major role in the degradation of misfolded proteins. The chain is ATP-dependent Clp protease proteolytic subunit from Histophilus somni (strain 2336) (Haemophilus somnus).